The chain runs to 236 residues: MARRYWNIHLEEMMEAGIHFGHGTRKWNPRMAPYISAKHKGIHITNLTRTARFLSEACDLVFDAASRGKQFLIVGTKNKAADLVARAAIRARCHYVNQKWLGGMLTNWSTTETRLHKFRDLRTEQKGGRLDSLPKRDAAILKRQLSRLQTYLGGIKYMTRVPDIVIVVDQQEEYTALRECITLGIPTICLIDTNCDPDLADISIPANDDAIASIRLILNKLVFAICEGRSSYIRNP.

This sequence belongs to the universal ribosomal protein uS2 family.

It localises to the plastid. It is found in the chloroplast. In Citrus sinensis (Sweet orange), this protein is Small ribosomal subunit protein uS2c (rps2).